Here is a 277-residue protein sequence, read N- to C-terminus: SPX domain-containing protein 3 (277 aa).

Residues 1–152 enclose the SPX domain; sequence MKFGKRLKKQ…GRLLRLPFIE (152 aa).

The sequence is that of SPX domain-containing protein 3 (SPX3) from Oryza sativa subsp. indica (Rice).